The sequence spans 277 residues: 3-methyl-2-oxobutanoate hydroxymethyltransferase (277 aa).

Residues aspartate 54 and aspartate 93 each contribute to the Mg(2+) site. 3-methyl-2-oxobutanoate-binding positions include aspartate 54–serine 55, aspartate 93, and lysine 122. Glutamate 124 contacts Mg(2+). Glutamate 191 functions as the Proton acceptor in the catalytic mechanism.

This sequence belongs to the PanB family. Homodecamer; pentamer of dimers. Requires Mg(2+) as cofactor.

It is found in the cytoplasm. The enzyme catalyses 3-methyl-2-oxobutanoate + (6R)-5,10-methylene-5,6,7,8-tetrahydrofolate + H2O = 2-dehydropantoate + (6S)-5,6,7,8-tetrahydrofolate. Its pathway is cofactor biosynthesis; (R)-pantothenate biosynthesis; (R)-pantoate from 3-methyl-2-oxobutanoate: step 1/2. Functionally, catalyzes the reversible reaction in which hydroxymethyl group from 5,10-methylenetetrahydrofolate is transferred onto alpha-ketoisovalerate to form ketopantoate. The polypeptide is 3-methyl-2-oxobutanoate hydroxymethyltransferase (Alkalilimnicola ehrlichii (strain ATCC BAA-1101 / DSM 17681 / MLHE-1)).